The chain runs to 754 residues: Exocyst complex component EXO84A (754 aa).

2 disordered regions span residues 514 to 540 (RILP…EQRE) and 734 to 754 (GHGE…YTSN). Polar residues predominate over residues 518-527 (QGTSQSTPRR). Positions 528 to 540 (GSSDRQNRPEQRE) are enriched in basic and acidic residues. Polar residues predominate over residues 741–754 (TSPSVSSAKSYTSN).

It belongs to the EXO84 family. The exocyst complex is composed of SEC3, SEC5, SEC6, SEC8, SEC10, EXO70A1 and EXO84.

Functionally, component of the exocyst complex involved in the docking of exocytic vesicles with fusion sites on the plasma membrane during regulated or polarized secretion. Involved in polarized cell growth and organ morphogenesis. During cytokinesis, involved in cell plate initiation, cell plate maturation and formation of new primary cell wall. The protein is Exocyst complex component EXO84A (EXO84A) of Arabidopsis thaliana (Mouse-ear cress).